The following is a 502-amino-acid chain: Cytochrome P450 3A40 (502 aa).

Cys443 contributes to the heme binding site.

Belongs to the cytochrome P450 family. Heme serves as cofactor.

The protein localises to the endoplasmic reticulum membrane. It is found in the microsome membrane. The enzyme catalyses an organic molecule + reduced [NADPH--hemoprotein reductase] + O2 = an alcohol + oxidized [NADPH--hemoprotein reductase] + H2O + H(+). This Oryzias latipes (Japanese rice fish) protein is Cytochrome P450 3A40 (cyp3a40).